The sequence spans 1385 residues: DNA-directed RNA polymerase subunit beta' (1385 aa).

Zn(2+) is bound by residues C72, C74, C87, and C90. Positions 463, 465, and 467 each coordinate Mg(2+). Zn(2+) is bound by residues C813, C887, C894, and C897.

Belongs to the RNA polymerase beta' chain family. In terms of assembly, the RNAP catalytic core consists of 2 alpha, 1 beta, 1 beta' and 1 omega subunit. When a sigma factor is associated with the core the holoenzyme is formed, which can initiate transcription. Mg(2+) serves as cofactor. Zn(2+) is required as a cofactor.

It carries out the reaction RNA(n) + a ribonucleoside 5'-triphosphate = RNA(n+1) + diphosphate. In terms of biological role, DNA-dependent RNA polymerase catalyzes the transcription of DNA into RNA using the four ribonucleoside triphosphates as substrates. The sequence is that of DNA-directed RNA polymerase subunit beta' from Trichlorobacter lovleyi (strain ATCC BAA-1151 / DSM 17278 / SZ) (Geobacter lovleyi).